Consider the following 364-residue polypeptide: Uroporphyrinogen decarboxylase (364 aa).

Substrate is bound by residues 49-53 (RQAGR), aspartate 98, tyrosine 173, serine 228, and histidine 341.

It belongs to the uroporphyrinogen decarboxylase family. In terms of assembly, homodimer.

It localises to the cytoplasm. The enzyme catalyses uroporphyrinogen III + 4 H(+) = coproporphyrinogen III + 4 CO2. It functions in the pathway porphyrin-containing compound metabolism; protoporphyrin-IX biosynthesis; coproporphyrinogen-III from 5-aminolevulinate: step 4/4. Its function is as follows. Catalyzes the decarboxylation of four acetate groups of uroporphyrinogen-III to yield coproporphyrinogen-III. In Protochlamydia amoebophila (strain UWE25), this protein is Uroporphyrinogen decarboxylase.